A 475-amino-acid polypeptide reads, in one-letter code: Doublecortin domain-containing protein 2 (475 aa).

2 consecutive Doublecortin domains span residues 17-100 (KSVL…LNYL) and 139-221 (CTIF…LPYS). The segment at 234–475 (YGQKASSLPP…ESNKASSAVA (242 aa)) is disordered. The segment covering 252 to 272 (GSGNYRQSKSTIGSSDNSSPQ) has biased composition (polar residues). Position 270 is a phosphoserine (Ser270). Residues 353-365 (EKTSKDANQKDDF) are compositionally biased toward basic and acidic residues. The segment covering 407-419 (TDEENGEELDQVT) has biased composition (acidic residues). The span at 455-475 (TVTSPQENEGNESNKASSAVA) shows a compositional bias: polar residues.

In terms of assembly, interacts with DVL1, DVL2 and DVL3. Expressed in hair cells of the inner ear.

It is found in the cell projection. The protein localises to the cilium. It localises to the cytoplasm. The protein resides in the cytoskeleton. Its subcellular location is the cilium axoneme. It is found in the kinocilium. Functionally, protein that plays a role in the inhibition of canonical Wnt signaling pathway. May be involved in neuronal migration during development of the cerebral neocortex. Involved in the control of ciliogenesis and ciliary length. The sequence is that of Doublecortin domain-containing protein 2 (Dcdc2) from Rattus norvegicus (Rat).